The following is a 399-amino-acid chain: Enoyl-[acyl-carrier-protein] reductase [NADH] (399 aa).

NAD(+) is bound by residues 48–53 (GASTGY), 74–75 (FE), 111–112 (DA), and 139–140 (LA). Residue Y225 participates in substrate binding. Y235 serves as the catalytic Proton donor. NAD(+)-binding positions include K244 and 273–275 (VVT).

The protein belongs to the TER reductase family. Monomer.

It catalyses the reaction a 2,3-saturated acyl-[ACP] + NAD(+) = a (2E)-enoyl-[ACP] + NADH + H(+). Its pathway is lipid metabolism; fatty acid biosynthesis. Involved in the final reduction of the elongation cycle of fatty acid synthesis (FAS II). Catalyzes the reduction of a carbon-carbon double bond in an enoyl moiety that is covalently linked to an acyl carrier protein (ACP). The protein is Enoyl-[acyl-carrier-protein] reductase [NADH] of Serratia proteamaculans (strain 568).